The primary structure comprises 96 residues: MKLKPIYDKIVVKRMEEKEQKTPSGIIIPDTAKEKPQVGEVIAVGNGKVLNNGEIRPLAVNVGDKVLFNKYAGTEVELDGEKYLVMAEDEVLAIIE.

It belongs to the GroES chaperonin family. Heptamer of 7 subunits arranged in a ring. Interacts with the chaperonin GroEL.

It localises to the cytoplasm. Together with the chaperonin GroEL, plays an essential role in assisting protein folding. The GroEL-GroES system forms a nano-cage that allows encapsulation of the non-native substrate proteins and provides a physical environment optimized to promote and accelerate protein folding. GroES binds to the apical surface of the GroEL ring, thereby capping the opening of the GroEL channel. The sequence is that of Co-chaperonin GroES from Hydrogenobaculum sp. (strain Y04AAS1).